Here is a 340-residue protein sequence, read N- to C-terminus: Erythroferrone (340 aa).

The first 24 residues, 1-24 (MASTRRPVGARTLLACASLLAAMG), serve as a signal peptide directing secretion. Disordered regions lie at residues 30–63 (SAEP…IAHA), 79–112 (SDKG…GPPG), and 141–161 (HCTR…PAAQ). Residues 40 to 58 (PQPPGAELPAPPANSPPEP) are compositionally biased toward pro residues. Residues 84-95 (NSKRRSKARRLK) show a composition bias toward basic residues. Pro99, Pro101, Pro102, Pro104, Pro105, and Pro107 each carry hydroxyproline. A compositionally biased stretch (pro residues) spans 99-112 (PGPPGPPGPQGPPG). Positions 145 to 154 (DLTTPASGSP) are enriched in polar residues. The 156-residue stretch at 185–340 (APRVEAAFHC…SHFSAILLGL (156 aa)) folds into the C1q domain. 4 N-linked (GlcNAc...) asparagine glycosylation sites follow: Asn229, Asn281, Asn292, and Asn319.

It belongs to the adipolin/erythroferrone family. Homodimer; disulfide-linked. Forms trimer, hexamers and higher molecular weight oligomers. May form heteromeric complexes with C1QTNF2 and C1QTNF12 and, to a lesser extent, with C1QTNF5 and C1QTNF10. Interacts with BMP5 and BMP7; the interaction inhibits BMP-induced transcription of HAMP. Interacts with BMP6; the interaction inhibits BMP-induced transcription of HAMP. Interacts with BMP2. Interacts with heterodimers composed of BMP2 and BMP6 in vitro, the interaction inhibits the heterodimer binding to its receptor BMPR1A /ALK3 and thereby suppresses expression of HAMP. Post-translationally, N-glycosylated; required for secretion of the mature protein. In terms of tissue distribution, expressed in the soleus muscle in the leg (at protein level). Found in blood (at protein level). Weakly expressed in the heart (at protein level). Predominantly expressed in skeletal muscle and, at much lower levels, in other tissues, including lung, eye, smooth muscle, brain and kidney. Within skeletal muscles, higher expression levels in soleus as compared with plantaris. Expressed in osteoblasts, mature osteoclasts and erythroblasts. When fasting, females tend to have higher circulating levels than males. Obese mice tend to have lower expression and circulating levels as compared to lean animals. Following EPO treatment, only expressed in bone marrow and spleen.

Its subcellular location is the secreted. In terms of biological role, iron-regulatory hormone that acts as an erythroid regulator after hemorrhage: produced by erythroblasts following blood loss and mediates suppression of hepcidin (HAMP) expression in the liver, thereby promoting increased iron absorption and mobilization from stores. Promotes lipid uptake into adipocytes and hepatocytes via transcriptional up-regulation of genes involved in fatty acid uptake. Inhibits apoptosis and inflammatory response in cardiomyocytes via promotion of sphingosine-1-phosphate (S1P) and cAMP-dependent activation of AKT signaling. Inhibits autophagy induced by nutrient deficiency in hepatocytes via promoting the phosphorylation of IRS1, AKT, and MTOR, and thereby subsequent activation of the AKT-MTOR signaling pathway. Negatively regulates the differentiation of osteoblasts, potentially via sequestering BMP2, and thereby inhibits the activation of SMAD signaling. The reduction in BMP2 signaling in osteoblasts also results in an increase in expression of the osteoclastogenesis-promoting factors TNFSF11/RANKL and SOST, thereby indirectly promotes bone resorption. The chain is Erythroferrone from Mus musculus (Mouse).